We begin with the raw amino-acid sequence, 289 residues long: NAC domain-containing protein 2 (289 aa).

One can recognise an NAC domain in the interval 7–158 (LPPGFRFHPT…DWVLCRIYNK (152 aa)).

As to quaternary structure, interacts with KIN10 and KIN11.

The protein localises to the nucleus. This Arabidopsis thaliana (Mouse-ear cress) protein is NAC domain-containing protein 2 (NAC002).